The sequence spans 235 residues: Protein shisa-5 (235 aa).

The first 26 residues, 1–26, serve as a signal peptide directing secretion; sequence MAAPAPSLWTLLLLLLLLPPPPGAHG. The Extracellular portion of the chain corresponds to 27–105; it reads ELCRPFGEDN…SSFDSDPMSG (79 aa). The helical transmembrane segment at 106–126 threads the bilayer; the sequence is FGATVAIGVTIFVVFIATIII. Residues 127-235 lie on the Cytoplasmic side of the membrane; the sequence is CFTCSCCCLY…TYMDSLKTIP (109 aa). A disordered region spans residues 157-235; that stretch reads APYPQPQPQP…TYMDSLKTIP (79 aa). Composition is skewed to pro residues over residues 159-172 and 181-211; these read YPQP…PSYP and PMPP…PPPY.

The protein belongs to the shisa family. In terms of assembly, interacts with PDCD6; PDCD6 can stabilize SHISA5. In terms of tissue distribution, spleen and thymus.

Its subcellular location is the endoplasmic reticulum membrane. The protein localises to the nucleus membrane. Its function is as follows. Can induce apoptosis in a caspase-dependent manner and plays a role in p53/TP53-dependent apoptosis. The protein is Protein shisa-5 (Shisa5) of Mus musculus (Mouse).